A 109-amino-acid chain; its full sequence is MMLITILLFLAAGLAEIGGGYLVWLWLREAKPAGYGIAGALILIVYGILPTFQSFPSFGRVYAAYGGVFIVLAVLWGWLVDRKTPDLYDWIGAFICLIGVCVILFAPRG.

Transmembrane regions (helical) follow at residues isoleucine 6–tryptophan 26, proline 32–phenylalanine 52, valine 61–aspartate 81, and leucine 87–proline 107.

This sequence belongs to the UPF0060 family.

The protein localises to the cell membrane. The polypeptide is UPF0060 membrane protein YfjF (yfjF) (Bacillus subtilis (strain 168)).